Consider the following 713-residue polypeptide: Fibroblast growth factor receptor 4 (713 aa).

The signal sequence occupies residues 1–20 (MLPLWLVLAGLLLAVGPAAS). Positions 21–54 (HRGEMEPDSLASGDDDEDSDGDGPHGDRSEEPVY) are disordered. The Extracellular segment spans residues 21–281 (HRGEMEPDSL…AETSEAKYTD (261 aa)). Over residues 42–54 (DGPHGDRSEEPVY) the composition is skewed to basic and acidic residues. Ig-like C2-type domains are found at residues 59-152 (PYWT…YLLD) and 161-261 (PILQ…AWLT). The cysteines at positions 84 and 136 are disulfide-linked. N-linked (GlcNAc...) asparagine glycans are attached at residues Asn133, Asn170, Asn202, Asn223, and Asn234. Cys183 and Cys245 are joined by a disulfide. Residues 282-302 (IIIYTSGSLAVAMALIIVVLC) traverse the membrane as a helical segment. The Cytoplasmic segment spans residues 303-713 (RMQTQSSKQP…CLFSCPSGRT (411 aa)). The Protein kinase domain occupies 379–667 (LVLGKPLGEG…ILAAISEEYL (289 aa)). ATP contacts are provided by residues 385 to 393 (LGEGCFGQV) and Lys415. Asp524 (proton acceptor) is an active-site residue. A phosphotyrosine; by autocatalysis mark is found at Tyr554, Tyr555, and Tyr666.

It belongs to the protein kinase superfamily. Tyr protein kinase family. Fibroblast growth factor receptor subfamily. In terms of assembly, monomer. Homodimer after ligand binding. Interacts with FGF1, FGF2, FGF4, FGF6, FGF8, FGF9, FGF16, FGF17, FGF18, FGF19, FGF21 and FGF23 (in vitro). Binding affinity for FGF family members is enhanced by interactions between FGFs and heparan sulfate proteoglycans. Interacts with KLB; this strongly increases the affinity for FGF19 and FGF23. Affinity for FGF19 is strongly increased by KLB and sulfated glycosaminoglycans. KLB and KL both interact with the core-glycosylated FGFR4 in the endoplasmic reticulum and promote its degradation, so that only FGFR4 with fully mature N-glycans is expressed at the cell surface. Identified in a complex with NCAM1, CDH2, PLCG1, FRS2, SRC, SHC1, GAP43 and CTTN. Interacts with MMP14 and HIP1. Interacts with STAT3. In terms of processing, N-glycosylated. Full maturation of the glycan chains in the Golgi is essential for high affinity interaction with FGF19. Post-translationally, ubiquitinated. Subject to proteasomal degradation when not fully glycosylated. Autophosphorylated. Binding of FGF family members together with heparan sulfate proteoglycan or heparin promotes receptor dimerization and autophosphorylation on tyrosine residues. Autophosphorylation occurs in trans between the two FGFR molecules present in the dimer.

It is found in the cell membrane. The protein resides in the endosome. The protein localises to the endoplasmic reticulum. It catalyses the reaction L-tyrosyl-[protein] + ATP = O-phospho-L-tyrosyl-[protein] + ADP + H(+). Its activity is regulated as follows. Present in an inactive conformation in the absence of bound ligand. Ligand binding leads to dimerization and activation by autophosphorylation on tyrosine residues. Tyrosine-protein kinase that acts as a cell-surface receptor for fibroblast growth factors and plays a role in the regulation of cell proliferation, differentiation and migration, and in regulation of lipid metabolism, bile acid biosynthesis, glucose uptake, vitamin D metabolism and phosphate homeostasis. Required for normal down-regulation of the expression of CYP7A1, the rate-limiting enzyme in bile acid synthesis, in response to FGF19. Phosphorylates PLCG1 and FRS2. Ligand binding leads to the activation of several signaling cascades. Activation of PLCG1 leads to the production of the cellular signaling molecules diacylglycerol and inositol 1,4,5-trisphosphate. Phosphorylation of FRS2 triggers recruitment of GRB2, GAB1, PIK3R1 and SOS1, and mediates activation of RAS, MAPK1/ERK2, MAPK3/ERK1 and the MAP kinase signaling pathway, as well as of the AKT1 signaling pathway. Promotes SRC-dependent phosphorylation of the matrix protease MMP14 and its lysosomal degradation. FGFR4 signaling is down-regulated by receptor internalization and degradation; MMP14 promotes internalization and degradation of FGFR4. The polypeptide is Fibroblast growth factor receptor 4 (FGFR4) (Coturnix coturnix (Common quail)).